A 121-amino-acid chain; its full sequence is Large ribosomal subunit protein bL20 (121 aa).

Belongs to the bacterial ribosomal protein bL20 family.

In terms of biological role, binds directly to 23S ribosomal RNA and is necessary for the in vitro assembly process of the 50S ribosomal subunit. It is not involved in the protein synthesizing functions of that subunit. In Mycoplasma mycoides subsp. mycoides SC (strain CCUG 32753 / NCTC 10114 / PG1), this protein is Large ribosomal subunit protein bL20.